Reading from the N-terminus, the 184-residue chain is DOMON domain-containing protein CBG21755 (184 aa).

An N-terminal signal peptide occupies residues 1–20; the sequence is MIVPISLLFLFLSFVPFSYS. The DOMON domain occupies 28-145; that stretch reads EVASMSWMVK…CVNWIVVPGG (118 aa). Asn49 is a glycosylation site (N-linked (GlcNAc...) asparagine).

Its subcellular location is the secreted. This Caenorhabditis briggsae protein is DOMON domain-containing protein CBG21755.